Consider the following 144-residue polypeptide: Maximins 9/H3 (144 aa).

The signal sequence occupies residues 1-18 (MNFKYIVAVSFLIASAYA). The propeptide occupies 19-43 (RSVKNDEQSLSQRDVLEEESLREIR). Tyrosine amide is present on tyrosine 70. Residues 74-123 (TAEEHEVMKRLEAIMRDLDSLDHPEEASERETRGFNQDEIANLFTKKEKR) constitute a propeptide that is removed on maturation. Position 143 is an isoleucine amide (isoleucine 143).

Belongs to the bombinin family. Expressed by the skin glands.

It is found in the secreted. Its function is as follows. Maximin-9 shows antimicrobial activity against bacteria and against the fungus C.albicans. It has little hemolytic activity. In terms of biological role, maximin-H3 shows antibacterial activity against both Gram-positive and Gram-negative bacteria. It also shows antimicrobial activity against the fungus C.albicans. Shows strong hemolytic activity. The sequence is that of Maximins 9/H3 from Bombina maxima (Giant fire-bellied toad).